Reading from the N-terminus, the 58-residue chain is MNKDKNEKEELDEEWTELIKHALEQGISPDDIRIFLNLGKKSSKPSASIERSHSINPF.

The Sin domain maps to asparagine 2 to lysine 40.

Heterodimer with SinR.

In terms of biological role, acts as an antagonist to SinR. SinI prevents SinR from binding to its target sequence on the gene for AprE. In Bacillus licheniformis, this protein is Protein SinI (sinI).